An 864-amino-acid chain; its full sequence is Protein sey1 (864 aa).

The Cytoplasmic portion of the chain corresponds to 1 to 747; it reads MATNGHFATI…KRSAIGGMTQ (747 aa). Positions 49–305 constitute a GB1/RHD3-type G domain; it reads GFNYHLISVF…IPADGFSRYA (257 aa). Residue 59-66 participates in GTP binding; it reads GSQSTGKS. Residues 480–506 adopt a coiled-coil conformation; sequence SDYKQELALYEKELADVSGRLRREEMR. Positions 675–701 are disordered; that stretch reads DRWIGHTPSSATPADEEDLPPIGGVDE. Positions 688–701 are enriched in acidic residues; the sequence is ADEEDLPPIGGVDE. Residues 748-768 traverse the membrane as a helical segment; that stretch reads VPLYFYGLLLALGWNEIIAVL. The Lumenal portion of the chain corresponds to 769 to 771; that stretch reads RNP. Residues 772-792 traverse the membrane as a helical segment; it reads AYFFLLFVCAVGAYVTYQLNL. The Cytoplasmic portion of the chain corresponds to 793–864; sequence WGPIIKMTEA…TSADEDMDDL (72 aa). Residues 830–864 are disordered; sequence AMSAGSGRSGEQYELSDLSKKGKARTSADEDMDDL.

The protein belongs to the TRAFAC class dynamin-like GTPase superfamily. GB1/RHD3 GTPase family. RHD3 subfamily.

The protein localises to the endoplasmic reticulum membrane. Functionally, cooperates with the reticulon proteins and tubule-shaping DP1 family proteins to generate and maintain the structure of the tubular endoplasmic reticulum network. Has GTPase activity, which is required for its function in ER organization. The protein is Protein sey1 (sey1) of Neosartorya fischeri (strain ATCC 1020 / DSM 3700 / CBS 544.65 / FGSC A1164 / JCM 1740 / NRRL 181 / WB 181) (Aspergillus fischerianus).